We begin with the raw amino-acid sequence, 400 residues long: Dihydrolipoyllysine-residue succinyltransferase component of 2-oxoglutarate dehydrogenase complex (400 aa).

The 76-residue stretch at Gly2–Asn77 folds into the Lipoyl-binding domain. Lys43 carries the N6-lipoyllysine modification. The segment covering Asn85–Gln97 has biased composition (polar residues). The tract at residues Asn85–Thr113 is disordered. The region spanning Thr113 to Met150 is the Peripheral subunit-binding (PSBD) domain. Active-site residues include His371 and Asp375.

This sequence belongs to the 2-oxoacid dehydrogenase family. Forms a 24-polypeptide structural core with octahedral symmetry. Part of the 2-oxoglutarate dehydrogenase (OGDH) complex composed of E1 (2-oxoglutarate dehydrogenase), E2 (dihydrolipoamide succinyltransferase) and E3 (dihydrolipoamide dehydrogenase); the complex contains multiple copies of the three enzymatic components (E1, E2 and E3). It depends on (R)-lipoate as a cofactor.

The enzyme catalyses N(6)-[(R)-dihydrolipoyl]-L-lysyl-[protein] + succinyl-CoA = N(6)-[(R)-S(8)-succinyldihydrolipoyl]-L-lysyl-[protein] + CoA. It functions in the pathway amino-acid degradation; L-lysine degradation via saccharopine pathway; glutaryl-CoA from L-lysine: step 6/6. In terms of biological role, E2 component of the 2-oxoglutarate dehydrogenase (OGDH) complex which catalyzes the second step in the conversion of 2-oxoglutarate to succinyl-CoA and CO(2). The chain is Dihydrolipoyllysine-residue succinyltransferase component of 2-oxoglutarate dehydrogenase complex (sucB) from Rickettsia bellii (strain RML369-C).